The sequence spans 484 residues: Glutamyl-tRNA(Gln) amidotransferase subunit A (484 aa).

Catalysis depends on charge relay system residues lysine 76 and serine 151. Serine 175 serves as the catalytic Acyl-ester intermediate.

The protein belongs to the amidase family. GatA subfamily. Heterotrimer of A, B and C subunits.

It carries out the reaction L-glutamyl-tRNA(Gln) + L-glutamine + ATP + H2O = L-glutaminyl-tRNA(Gln) + L-glutamate + ADP + phosphate + H(+). Functionally, allows the formation of correctly charged Gln-tRNA(Gln) through the transamidation of misacylated Glu-tRNA(Gln) in organisms which lack glutaminyl-tRNA synthetase. The reaction takes place in the presence of glutamine and ATP through an activated gamma-phospho-Glu-tRNA(Gln). In Thioalkalivibrio sulfidiphilus (strain HL-EbGR7), this protein is Glutamyl-tRNA(Gln) amidotransferase subunit A.